Here is a 126-residue protein sequence, read N- to C-terminus: MSAPNPKAFPLADSALTQQILDVVQQSQNLRQLKKGANEATKTLNRGISEFIIMAADTEPIEILLHLPLLCEDKNVPYVFVPSKAALGRACGVSRPVIAASVTSNDASSIKNQIYGIKDKIETLLI.

Belongs to the eukaryotic ribosomal protein eL8 family. Component of the U3 snoRNP particle. Binds to the C'/D and B/C motifs in U3 snoRNA. Component of the 25S U4/U6.U5 tri-snRNP particle, a subcomplex of the spliceosome. Binds to the 5' stem-loop of U4 snRNA.

The protein localises to the nucleus. It is found in the nucleolus. Functionally, common component of the spliceosome and rRNA processing machinery. In association with the spliceosomal U4/U6.U5 tri-snRNP particle, required for splicing of pre-mRNA. In association with box C/D snoRNPs, required for processing of pre-ribosomal RNA (rRNA) and site-specific 2'-O-methylation of substrate RNAs. Essential for the accumulation and stability of U4 snRNA, U6 snRNA, and box C/D snoRNAs. This chain is 13 kDa ribonucleoprotein-associated protein (SNU13), found in Candida albicans (strain SC5314 / ATCC MYA-2876) (Yeast).